The following is a 450-amino-acid chain: UDP-N-acetylglucosamine--peptide N-acetylglucosaminyltransferase stabilizing protein GtfB (450 aa).

Belongs to the GtfB family. In terms of assembly, forms a heterotetramer with 2 subunits each of GtfA and GtfB. Part of the accessory SecA2/SecY2 protein translocation apparatus required to export cell wall protein GspB.

Its subcellular location is the cell membrane. Its pathway is protein modification; protein glycosylation. Required for polymorphic O-glycosylation of GspB, a serine-rich repeat cell wall protein encoded upstream in the same operon. A substrate-binding protein that is part of the accessory SecA2/SecY2 system specifically required to export GspB. The GtfA-GtfB complex adds GlcNAc from UDP-GlcNAc to GspB, attaching the first sugar residue. Upon coexpression in E.coli with GtfA glycosylates GspB constructs. Binds the GspB protein substrate; alone this subunit only recognizes partially glycosylated GspB, but is constrained by GtfA to also recognize unglycosylated protein. The enzyme probably modifies its tertiary conformation by opening and closing its intersubunit interfaces to accomodate the increasingly glycosylated substrate. This is UDP-N-acetylglucosamine--peptide N-acetylglucosaminyltransferase stabilizing protein GtfB from Streptococcus gordonii.